We begin with the raw amino-acid sequence, 154 residues long: Myoglobin (154 aa).

In terms of domain architecture, Globin spans Gly-2 to Lys-148. Phosphoserine is present on Ser-4. His-65 lines the nitrite pocket. O2 is bound at residue His-65. Thr-68 carries the phosphothreonine modification. His-94 serves as a coordination point for heme b.

This sequence belongs to the globin family. Monomeric.

It localises to the cytoplasm. The protein localises to the sarcoplasm. It carries out the reaction Fe(III)-heme b-[protein] + nitric oxide + H2O = Fe(II)-heme b-[protein] + nitrite + 2 H(+). The catalysed reaction is H2O2 + AH2 = A + 2 H2O. Monomeric heme protein which primary function is to store oxygen and facilitate its diffusion within muscle tissues. Reversibly binds oxygen through a pentacoordinated heme iron and enables its timely and efficient release as needed during periods of heightened demand. Depending on the oxidative conditions of tissues and cells, and in addition to its ability to bind oxygen, it also has a nitrite reductase activity whereby it regulates the production of bioactive nitric oxide. Under stress conditions, like hypoxia and anoxia, it also protects cells against reactive oxygen species thanks to its pseudoperoxidase activity. The chain is Myoglobin (MB) from Ornithorhynchus anatinus (Duckbill platypus).